Here is a 418-residue protein sequence, read N- to C-terminus: Glutamyl-tRNA reductase (418 aa).

Residues 49-52 (TCNR), Ser-109, 114-116 (EPQ), and Gln-120 each bind substrate. Cys-50 functions as the Nucleophile in the catalytic mechanism. Residue 189 to 194 (GAGETI) coordinates NADP(+).

Belongs to the glutamyl-tRNA reductase family. As to quaternary structure, homodimer.

The enzyme catalyses (S)-4-amino-5-oxopentanoate + tRNA(Glu) + NADP(+) = L-glutamyl-tRNA(Glu) + NADPH + H(+). It participates in porphyrin-containing compound metabolism; protoporphyrin-IX biosynthesis; 5-aminolevulinate from L-glutamyl-tRNA(Glu): step 1/2. Functionally, catalyzes the NADPH-dependent reduction of glutamyl-tRNA(Glu) to glutamate 1-semialdehyde (GSA). In Klebsiella pneumoniae subsp. pneumoniae (strain ATCC 700721 / MGH 78578), this protein is Glutamyl-tRNA reductase.